Here is a 689-residue protein sequence, read N- to C-terminus: Transketolase (689 aa).

His-56 is a substrate binding site. Thiamine diphosphate contacts are provided by residues His-96 and 144–146 (GNL). Mg(2+) is bound at residue Asp-185. Positions 186 and 215 each coordinate thiamine diphosphate. Mg(2+)-binding residues include Asn-215 and Ile-217. The substrate site is built by His-289, Arg-380, and Ser-407. His-289 is a binding site for thiamine diphosphate. Catalysis depends on Glu-434, which acts as the Proton donor. Phe-460 is a binding site for thiamine diphosphate. 3 residues coordinate substrate: His-484, Asp-492, and Arg-543.

It belongs to the transketolase family. In terms of assembly, homodimer. It depends on Mg(2+) as a cofactor. Requires Ca(2+) as cofactor. The cofactor is Mn(2+). Co(2+) serves as cofactor. Thiamine diphosphate is required as a cofactor.

The enzyme catalyses D-sedoheptulose 7-phosphate + D-glyceraldehyde 3-phosphate = aldehydo-D-ribose 5-phosphate + D-xylulose 5-phosphate. Functionally, catalyzes the transfer of a two-carbon ketol group from a ketose donor to an aldose acceptor, via a covalent intermediate with the cofactor thiamine pyrophosphate. The polypeptide is Transketolase (tkt) (Aquifex aeolicus (strain VF5)).